Consider the following 187-residue polypeptide: Large ribosomal subunit protein bL17 (187 aa).

A disordered region spans residues 122-187; it reads PKVRSSRTST…EADAAEKSDK (66 aa). Residues 127–144 are compositionally biased toward low complexity; sequence SRTSTATAPVAAAPVAEA. Residues 145-157 show a composition bias toward acidic residues; that stretch reads PAEESDVPVEETD. Residues 167–176 show a composition bias toward low complexity; it reads AETTDAAAAE.

Belongs to the bacterial ribosomal protein bL17 family. As to quaternary structure, part of the 50S ribosomal subunit. Contacts protein L32.

This chain is Large ribosomal subunit protein bL17, found in Clavibacter sepedonicus (Clavibacter michiganensis subsp. sepedonicus).